Here is a 472-residue protein sequence, read N- to C-terminus: E3 ubiquitin-protein ligase MYLIP-A (472 aa).

In terms of domain architecture, FERM spans 1–279 (MLCHVTRPDA…ETHAFYRCDT (279 aa)). The RING-type zinc-finger motif lies at 384–419 (CMLCCEEEIDAAFCPCGHMVCCQNCAAQLQSCPVCR).

As to quaternary structure, interacts with anxa5. In terms of tissue distribution, ubiquitous.

Its subcellular location is the cytoplasm. The protein localises to the cytosol. It carries out the reaction S-ubiquitinyl-[E2 ubiquitin-conjugating enzyme]-L-cysteine + [acceptor protein]-L-lysine = [E2 ubiquitin-conjugating enzyme]-L-cysteine + N(6)-ubiquitinyl-[acceptor protein]-L-lysine.. It participates in protein modification; protein ubiquitination. Functionally, E3 ubiquitin-protein ligase that mediates ubiquitination and subsequent proteasomal degradation of myosin regulatory light chain (MRLC). Regulates cell movements during gastrulation by acting downstream of fz7 to antagonize the frizzled-signaling pathway. The chain is E3 ubiquitin-protein ligase MYLIP-A (mylipa) from Danio rerio (Zebrafish).